The sequence spans 293 residues: Glutamyl-Q tRNA(Asp) synthetase (293 aa).

Residues 4 to 8 and Glu-40 each bind L-glutamate; that span reads RYAPS. The short motif at 7–17 is the 'HIGH' region element; sequence PSPSGDLHFGN. Residues Cys-92, Cys-94, Tyr-113, and Cys-117 each coordinate Zn(2+). L-glutamate is bound by residues Tyr-180 and Arg-198. The short motif at 236-240 is the 'KMSKS' region element; the sequence is RLAKR. Lys-239 contacts ATP.

The protein belongs to the class-I aminoacyl-tRNA synthetase family. GluQ subfamily. The cofactor is Zn(2+).

Its function is as follows. Catalyzes the tRNA-independent activation of glutamate in presence of ATP and the subsequent transfer of glutamate onto a tRNA(Asp). Glutamate is transferred on the 2-amino-5-(4,5-dihydroxy-2-cyclopenten-1-yl) moiety of the queuosine in the wobble position of the QUC anticodon. This is Glutamyl-Q tRNA(Asp) synthetase from Corynebacterium glutamicum (strain ATCC 13032 / DSM 20300 / JCM 1318 / BCRC 11384 / CCUG 27702 / LMG 3730 / NBRC 12168 / NCIMB 10025 / NRRL B-2784 / 534).